The sequence spans 200 residues: dITP/XTP pyrophosphatase (200 aa).

Residue 16–21 (SNNDGK) coordinates substrate. Positions 46 and 75 each coordinate Mg(2+). D75 (proton acceptor) is an active-site residue. Substrate contacts are provided by residues S76, 154 to 157 (FGYD), K177, and 182 to 183 (HR).

This sequence belongs to the HAM1 NTPase family. Homodimer. Mg(2+) serves as cofactor.

The enzyme catalyses XTP + H2O = XMP + diphosphate + H(+). It carries out the reaction dITP + H2O = dIMP + diphosphate + H(+). The catalysed reaction is ITP + H2O = IMP + diphosphate + H(+). Functionally, pyrophosphatase that catalyzes the hydrolysis of nucleoside triphosphates to their monophosphate derivatives, with a high preference for the non-canonical purine nucleotides XTP (xanthosine triphosphate), dITP (deoxyinosine triphosphate) and ITP. Seems to function as a house-cleaning enzyme that removes non-canonical purine nucleotides from the nucleotide pool, thus preventing their incorporation into DNA/RNA and avoiding chromosomal lesions. The polypeptide is dITP/XTP pyrophosphatase (Prochlorococcus marinus (strain SARG / CCMP1375 / SS120)).